The primary structure comprises 307 residues: Agmatinase (307 aa).

The Mn(2+) site is built by His-128, Asp-151, His-153, Asp-155, Asp-232, and Asp-234.

This sequence belongs to the arginase family. Agmatinase subfamily. Mn(2+) serves as cofactor.

The catalysed reaction is agmatine + H2O = urea + putrescine. Its pathway is amine and polyamine biosynthesis; putrescine biosynthesis via agmatine pathway; putrescine from agmatine: step 1/1. Catalyzes the formation of putrescine from agmatine. This is Agmatinase from Neisseria meningitidis serogroup C (strain 053442).